Reading from the N-terminus, the 406-residue chain is Arginine biosynthesis bifunctional protein ArgJ (406 aa).

Residues threonine 154, lysine 180, threonine 191, glutamate 278, asparagine 401, and threonine 406 each coordinate substrate. Threonine 191 (nucleophile) is an active-site residue.

The protein belongs to the ArgJ family. As to quaternary structure, heterotetramer of two alpha and two beta chains.

It localises to the cytoplasm. The enzyme catalyses N(2)-acetyl-L-ornithine + L-glutamate = N-acetyl-L-glutamate + L-ornithine. It catalyses the reaction L-glutamate + acetyl-CoA = N-acetyl-L-glutamate + CoA + H(+). It participates in amino-acid biosynthesis; L-arginine biosynthesis; L-ornithine and N-acetyl-L-glutamate from L-glutamate and N(2)-acetyl-L-ornithine (cyclic): step 1/1. Its pathway is amino-acid biosynthesis; L-arginine biosynthesis; N(2)-acetyl-L-ornithine from L-glutamate: step 1/4. Functionally, catalyzes two activities which are involved in the cyclic version of arginine biosynthesis: the synthesis of N-acetylglutamate from glutamate and acetyl-CoA as the acetyl donor, and of ornithine by transacetylation between N(2)-acetylornithine and glutamate. The polypeptide is Arginine biosynthesis bifunctional protein ArgJ (Gloeobacter violaceus (strain ATCC 29082 / PCC 7421)).